A 305-amino-acid chain; its full sequence is Ferredoxin--NADP reductase (305 aa).

The FAD site is built by Glu-31, Tyr-42, Val-82, and Asp-274.

Belongs to the ferredoxin--NADP reductase type 2 family. As to quaternary structure, homodimer. FAD is required as a cofactor.

The enzyme catalyses 2 reduced [2Fe-2S]-[ferredoxin] + NADP(+) + H(+) = 2 oxidized [2Fe-2S]-[ferredoxin] + NADPH. The sequence is that of Ferredoxin--NADP reductase from Ignicoccus hospitalis (strain KIN4/I / DSM 18386 / JCM 14125).